We begin with the raw amino-acid sequence, 580 residues long: DNA mismatch repair protein MutL (580 aa).

It belongs to the DNA mismatch repair MutL/HexB family.

Functionally, this protein is involved in the repair of mismatches in DNA. It is required for dam-dependent methyl-directed DNA mismatch repair. May act as a 'molecular matchmaker', a protein that promotes the formation of a stable complex between two or more DNA-binding proteins in an ATP-dependent manner without itself being part of a final effector complex. This Chlamydia felis (strain Fe/C-56) (Chlamydophila felis) protein is DNA mismatch repair protein MutL.